A 233-amino-acid chain; its full sequence is Biosynthetic peptidoglycan transglycosylase (233 aa).

The chain crosses the membrane as a helical span at residues 8–28 (LIALPVGIFIFFNAYVYGNII).

The protein belongs to the glycosyltransferase 51 family.

The protein localises to the cell inner membrane. It carries out the reaction [GlcNAc-(1-&gt;4)-Mur2Ac(oyl-L-Ala-gamma-D-Glu-L-Lys-D-Ala-D-Ala)](n)-di-trans,octa-cis-undecaprenyl diphosphate + beta-D-GlcNAc-(1-&gt;4)-Mur2Ac(oyl-L-Ala-gamma-D-Glu-L-Lys-D-Ala-D-Ala)-di-trans,octa-cis-undecaprenyl diphosphate = [GlcNAc-(1-&gt;4)-Mur2Ac(oyl-L-Ala-gamma-D-Glu-L-Lys-D-Ala-D-Ala)](n+1)-di-trans,octa-cis-undecaprenyl diphosphate + di-trans,octa-cis-undecaprenyl diphosphate + H(+). It functions in the pathway cell wall biogenesis; peptidoglycan biosynthesis. Functionally, peptidoglycan polymerase that catalyzes glycan chain elongation from lipid-linked precursors. The polypeptide is Biosynthetic peptidoglycan transglycosylase (Neisseria gonorrhoeae (strain ATCC 700825 / FA 1090)).